The primary structure comprises 502 residues: Probable cytosol aminopeptidase (502 aa).

The Mn(2+) site is built by K270 and D275. Residue K282 is part of the active site. Residues D293, D352, and E354 each contribute to the Mn(2+) site. R356 is a catalytic residue.

It belongs to the peptidase M17 family. The cofactor is Mn(2+).

Its subcellular location is the cytoplasm. The catalysed reaction is Release of an N-terminal amino acid, Xaa-|-Yaa-, in which Xaa is preferably Leu, but may be other amino acids including Pro although not Arg or Lys, and Yaa may be Pro. Amino acid amides and methyl esters are also readily hydrolyzed, but rates on arylamides are exceedingly low.. It carries out the reaction Release of an N-terminal amino acid, preferentially leucine, but not glutamic or aspartic acids.. Its function is as follows. Presumably involved in the processing and regular turnover of intracellular proteins. Catalyzes the removal of unsubstituted N-terminal amino acids from various peptides. In Desulfotalea psychrophila (strain LSv54 / DSM 12343), this protein is Probable cytosol aminopeptidase.